The sequence spans 345 residues: Phosphoribosylformylglycinamidine cyclo-ligase (345 aa).

This sequence belongs to the AIR synthase family.

Its subcellular location is the cytoplasm. The enzyme catalyses 2-formamido-N(1)-(5-O-phospho-beta-D-ribosyl)acetamidine + ATP = 5-amino-1-(5-phospho-beta-D-ribosyl)imidazole + ADP + phosphate + H(+). It participates in purine metabolism; IMP biosynthesis via de novo pathway; 5-amino-1-(5-phospho-D-ribosyl)imidazole from N(2)-formyl-N(1)-(5-phospho-D-ribosyl)glycinamide: step 2/2. The chain is Phosphoribosylformylglycinamidine cyclo-ligase from Synechococcus sp. (strain CC9902).